The primary structure comprises 241 residues: 1-(5-phosphoribosyl)-5-[(5-phosphoribosylamino)methylideneamino] imidazole-4-carboxamide isomerase (241 aa).

Asp-8 serves as the catalytic Proton acceptor. Asp-130 acts as the Proton donor in catalysis.

The protein belongs to the HisA/HisF family.

It localises to the cytoplasm. It catalyses the reaction 1-(5-phospho-beta-D-ribosyl)-5-[(5-phospho-beta-D-ribosylamino)methylideneamino]imidazole-4-carboxamide = 5-[(5-phospho-1-deoxy-D-ribulos-1-ylimino)methylamino]-1-(5-phospho-beta-D-ribosyl)imidazole-4-carboxamide. It functions in the pathway amino-acid biosynthesis; L-histidine biosynthesis; L-histidine from 5-phospho-alpha-D-ribose 1-diphosphate: step 4/9. The chain is 1-(5-phosphoribosyl)-5-[(5-phosphoribosylamino)methylideneamino] imidazole-4-carboxamide isomerase from Leptospira borgpetersenii serovar Hardjo-bovis (strain L550).